A 128-amino-acid polypeptide reads, in one-letter code: Ribonuclease pancreatic (128 aa).

Residues Lys1–Ser20 are disordered. Residues Lys7 and Arg10 each contribute to the substrate site. The active-site Proton acceptor is His12. 4 disulfide bridges follow: Cys26-Cys84, Cys40-Cys95, Cys58-Cys110, and Cys65-Cys72. An N-linked (GlcNAc...) asparagine glycan is attached at Asn34. Residues Lys41 to Thr45, Lys66, and Arg85 contribute to the substrate site. His119 serves as the catalytic Proton donor.

It belongs to the pancreatic ribonuclease family. As to quaternary structure, monomer. Interacts with and forms tight 1:1 complexes with RNH1. Dimerization of two such complexes may occur. Interaction with RNH1 inhibits this protein. In terms of tissue distribution, pancreas.

The protein resides in the secreted. The catalysed reaction is an [RNA] containing cytidine + H2O = an [RNA]-3'-cytidine-3'-phosphate + a 5'-hydroxy-ribonucleotide-3'-[RNA].. It carries out the reaction an [RNA] containing uridine + H2O = an [RNA]-3'-uridine-3'-phosphate + a 5'-hydroxy-ribonucleotide-3'-[RNA].. Endonuclease that catalyzes the cleavage of RNA on the 3' side of pyrimidine nucleotides. Acts on single-stranded and double-stranded RNA. This is Ribonuclease pancreatic (RNASE1) from Choloepus hoffmanni (Hoffmann's two-fingered sloth).